We begin with the raw amino-acid sequence, 606 residues long: Prostaglandin G/H synthase 1 (606 aa).

A signal peptide spans 1–30 (MSRSSPSLRLPVLLLLLLLLLLPPPPPVLP). An EGF-like domain is found at 38 to 76 (PVNPCCYFPCQHQGVCVRVALDRYQCDCTRTGYSGPNCT). 4 disulfide bridges follow: C42–C53, C43–C165, C47–C63, and C65–C75. Residues N74, N110, and N150 are each glycosylated (N-linked (GlcNAc...) asparagine). H213 acts as the Proton acceptor in catalysis. Y391 functions as the For cyclooxygenase activity in the catalytic mechanism. Residue H394 participates in heme b binding. N-linked (GlcNAc...) asparagine glycosylation occurs at N416. Residues C575 and C581 are joined by a disulfide bond.

This sequence belongs to the prostaglandin G/H synthase family. As to quaternary structure, homodimer. Requires heme b as cofactor.

Its subcellular location is the microsome membrane. It is found in the endoplasmic reticulum membrane. It carries out the reaction (5Z,8Z,11Z,14Z)-eicosatetraenoate + AH2 + 2 O2 = prostaglandin H2 + A + H2O. It catalyses the reaction (5Z,8Z,11Z,14Z)-eicosatetraenoate + 2 O2 = prostaglandin G2. The enzyme catalyses prostaglandin G2 + AH2 = prostaglandin H2 + A + H2O. The catalysed reaction is (9Z,12Z)-octadecadienoate + AH2 + O2 = (9R)-hydroxy-(10E,12Z)-octadecadienoate + A + H2O. It carries out the reaction (9Z,12Z)-octadecadienoate + AH2 + O2 = (9S)-hydroxy-(10E,12Z)-octadecadienoate + A + H2O. It catalyses the reaction (9Z,12Z)-octadecadienoate + AH2 + O2 = (13S)-hydroxy-(9Z,11E)-octadecadienoate + A + H2O. The enzyme catalyses (9Z,12Z)-octadecadienoate + AH2 + O2 = (13R)-hydroxy-(9Z,11E)-octadecadienoate + A + H2O. The protein operates within lipid metabolism; prostaglandin biosynthesis. The cyclooxygenase activity is inhibited by nonsteroidal anti-inflammatory drugs (NSAIDs) including ibuprofen, flurbiprofen, ketoprofen, naproxen, flurbiprofen, anirolac, fenclofenac and diclofenac. In terms of biological role, dual cyclooxygenase and peroxidase that plays an important role in the biosynthesis pathway of prostanoids, a class of C20 oxylipins mainly derived from arachidonate ((5Z,8Z,11Z,14Z)-eicosatetraenoate, AA, C20:4(n-6)), with a particular role in the inflammatory response. The cyclooxygenase activity oxygenates AA to the hydroperoxy endoperoxide prostaglandin G2 (PGG2), and the peroxidase activity reduces PGG2 to the hydroxy endoperoxide prostaglandin H2 (PGH2), the precursor of all 2-series prostaglandins and thromboxanes. This complex transformation is initiated by abstraction of hydrogen at carbon 13 (with S-stereochemistry), followed by insertion of molecular O2 to form the endoperoxide bridge between carbon 9 and 11 that defines prostaglandins. The insertion of a second molecule of O2 (bis-oxygenase activity) yields a hydroperoxy group in PGG2 that is then reduced to PGH2 by two electrons. Involved in the constitutive production of prostanoids in particular in the stomach and platelets. In gastric epithelial cells, it is a key step in the generation of prostaglandins, such as prostaglandin E2 (PGE2), which plays an important role in cytoprotection. In platelets, it is involved in the generation of thromboxane A2 (TXA2), which promotes platelet activation and aggregation, vasoconstriction and proliferation of vascular smooth muscle cells. Can also use linoleate (LA, (9Z,12Z)-octadecadienoate, C18:2(n-6)) as substrate and produce hydroxyoctadecadienoates (HODEs) in a regio- and stereospecific manner, being (9R)-HODE ((9R)-hydroxy-(10E,12Z)-octadecadienoate) and (13S)-HODE ((13S)-hydroxy-(9Z,11E)-octadecadienoate) its major products. The polypeptide is Prostaglandin G/H synthase 1 (PTGS1) (Oryctolagus cuniculus (Rabbit)).